The following is a 347-amino-acid chain: Holliday junction branch migration complex subunit RuvB (347 aa).

Residues 1–186 (MKDENSINFL…FGITARFELY (186 aa)) form a large ATPase domain (RuvB-L) region. ATP contacts are provided by residues leucine 25, arginine 26, glycine 67, lysine 70, threonine 71, threonine 72, 133 to 135 (EDY), arginine 176, tyrosine 186, and arginine 223. A Mg(2+)-binding site is contributed by threonine 71. Residues 187-257 (SEIELVEIIK…IVAIGLEMLR (71 aa)) are small ATPAse domain (RuvB-S). Residues 260–347 (GEGLDEQDRN…NLNENQRVSF (88 aa)) are head domain (RuvB-H). The DNA site is built by arginine 315 and arginine 320.

This sequence belongs to the RuvB family. As to quaternary structure, homohexamer. Forms an RuvA(8)-RuvB(12)-Holliday junction (HJ) complex. HJ DNA is sandwiched between 2 RuvA tetramers; dsDNA enters through RuvA and exits via RuvB. An RuvB hexamer assembles on each DNA strand where it exits the tetramer. Each RuvB hexamer is contacted by two RuvA subunits (via domain III) on 2 adjacent RuvB subunits; this complex drives branch migration. In the full resolvosome a probable DNA-RuvA(4)-RuvB(12)-RuvC(2) complex forms which resolves the HJ.

Its subcellular location is the cytoplasm. The enzyme catalyses ATP + H2O = ADP + phosphate + H(+). In terms of biological role, the RuvA-RuvB-RuvC complex processes Holliday junction (HJ) DNA during genetic recombination and DNA repair, while the RuvA-RuvB complex plays an important role in the rescue of blocked DNA replication forks via replication fork reversal (RFR). RuvA specifically binds to HJ cruciform DNA, conferring on it an open structure. The RuvB hexamer acts as an ATP-dependent pump, pulling dsDNA into and through the RuvAB complex. RuvB forms 2 homohexamers on either side of HJ DNA bound by 1 or 2 RuvA tetramers; 4 subunits per hexamer contact DNA at a time. Coordinated motions by a converter formed by DNA-disengaged RuvB subunits stimulates ATP hydrolysis and nucleotide exchange. Immobilization of the converter enables RuvB to convert the ATP-contained energy into a lever motion, pulling 2 nucleotides of DNA out of the RuvA tetramer per ATP hydrolyzed, thus driving DNA branch migration. The RuvB motors rotate together with the DNA substrate, which together with the progressing nucleotide cycle form the mechanistic basis for DNA recombination by continuous HJ branch migration. Branch migration allows RuvC to scan DNA until it finds its consensus sequence, where it cleaves and resolves cruciform DNA. The protein is Holliday junction branch migration complex subunit RuvB of Borreliella afzelii (strain PKo) (Borrelia afzelii).